We begin with the raw amino-acid sequence, 689 residues long: Translation initiation factor IF-2 (689 aa).

Positions 70–107 (VRSKKNSNKKKKKGKGNQDKRQENFAGKQQAQTVETPD) are disordered. Positions 71–84 (RSKKNSNKKKKKGK) are enriched in basic residues. The region spanning 191 to 360 (ERPAVVTIMG…LLVSEVEEYK (170 aa)) is the tr-type G domain. Residues 200 to 207 (GHVDHGKT) are G1. GTP is bound at residue 200-207 (GHVDHGKT). Positions 225-229 (GITQH) are G2. Residues 246–249 (DTPG) are G3. GTP-binding positions include 246 to 250 (DTPGH) and 300 to 303 (NKMD). The segment at 300–303 (NKMD) is G4. Residues 336-338 (SAI) are G5.

It belongs to the TRAFAC class translation factor GTPase superfamily. Classic translation factor GTPase family. IF-2 subfamily.

The protein localises to the cytoplasm. One of the essential components for the initiation of protein synthesis. Protects formylmethionyl-tRNA from spontaneous hydrolysis and promotes its binding to the 30S ribosomal subunits. Also involved in the hydrolysis of GTP during the formation of the 70S ribosomal complex. The sequence is that of Translation initiation factor IF-2 from Bacillus cytotoxicus (strain DSM 22905 / CIP 110041 / 391-98 / NVH 391-98).